The sequence spans 71 residues: Beta-defensin 9 (71 aa).

Positions 1-23 (MRTLCSLLLICCLLFSYDTPVVG) are cleaved as a signal peptide. 3 disulfide bridges follow: Cys-37–Cys-66, Cys-44–Cys-59, and Cys-49–Cys-67.

It belongs to the beta-defensin family.

It localises to the secreted. In terms of biological role, has antibacterial activity. The protein is Beta-defensin 9 (Defb9) of Rattus norvegicus (Rat).